A 292-amino-acid chain; its full sequence is Imipenem-hydrolyzing beta-lactamase (292 aa).

The first 27 residues, 1-27, serve as a signal peptide directing secretion; sequence MSLNVKQSRIAILFSSCLISISFFSQA. A disulfide bridge connects residues Cys-70 and Cys-240. Catalysis depends on Ser-71, which acts as the Acyl-ester intermediate. 236-238 provides a ligand contact to substrate; that stretch reads KTG.

Belongs to the class-A beta-lactamase family.

The catalysed reaction is a beta-lactam + H2O = a substituted beta-amino acid. Functionally, hydrolyzes carbapenems such as imipenem, which are extended-spectrum beta-lactam antibiotics. This Enterobacter cloacae protein is Imipenem-hydrolyzing beta-lactamase (nmcA).